The primary structure comprises 512 residues: Maturase K (512 aa).

The protein belongs to the intron maturase 2 family. MatK subfamily.

It is found in the plastid. The protein localises to the chloroplast. Functionally, usually encoded in the trnK tRNA gene intron. Probably assists in splicing its own and other chloroplast group II introns. This is Maturase K from Lilium regale (Regal lily).